The chain runs to 329 residues: uncharacterized protein (329 aa).

Residues 38–184 (IVKLILKSQE…MACLMRAKNF (147 aa)) form the SIS domain. 56–61 (GVGKSA) serves as a coordination point for ATP. CBS domains lie at 211–267 (QTTN…GVSL) and 270–329 (EVRH…GLKA).

It belongs to the SIS family. GutQ/KpsF subfamily.

This is an uncharacterized protein from Helicobacter pylori (strain ATCC 700392 / 26695) (Campylobacter pylori).